Here is a 285-residue protein sequence, read N- to C-terminus: tRNA-cytidine(32) 2-sulfurtransferase (285 aa).

A PP-loop motif motif is present at residues 48-53; that stretch reads SGGKDS. [4Fe-4S] cluster is bound by residues Cys-122, Cys-125, and Cys-213.

The protein belongs to the TtcA family. As to quaternary structure, homodimer. Mg(2+) is required as a cofactor. It depends on [4Fe-4S] cluster as a cofactor.

The protein localises to the cytoplasm. It carries out the reaction cytidine(32) in tRNA + S-sulfanyl-L-cysteinyl-[cysteine desulfurase] + AH2 + ATP = 2-thiocytidine(32) in tRNA + L-cysteinyl-[cysteine desulfurase] + A + AMP + diphosphate + H(+). Its pathway is tRNA modification. Functionally, catalyzes the ATP-dependent 2-thiolation of cytidine in position 32 of tRNA, to form 2-thiocytidine (s(2)C32). The sulfur atoms are provided by the cysteine/cysteine desulfurase (IscS) system. In Cytophaga hutchinsonii (strain ATCC 33406 / DSM 1761 / CIP 103989 / NBRC 15051 / NCIMB 9469 / D465), this protein is tRNA-cytidine(32) 2-sulfurtransferase.